The chain runs to 179 residues: Protein HoxT (179 aa).

The sequence is that of Protein HoxT (hoxT) from Cupriavidus necator (strain ATCC 17699 / DSM 428 / KCTC 22496 / NCIMB 10442 / H16 / Stanier 337) (Ralstonia eutropha).